The sequence spans 245 residues: E3 ubiquitin-protein ligase RNF138 (245 aa).

The residue at position 2 (A2) is an N-acetylalanine. The RING-type zinc finger occupies 18–58 (CPVCQEVLKTPVRTAACQHVFCRKCFLTAMRESGIHCPLCR). C86, C89, H101, and C105 together coordinate Zn(2+). The segment at 86–105 (CRCCAKQIKFYRMRHHYKSC) adopts a C2HC RNF-type zinc-finger fold. The tract at residues 128 to 153 (VGNSNRSETSASDNIETYQENTGSSG) is disordered. C2H2-type zinc fingers lie at residues 157-180 (FKCPLCQESNFTRQRLLDHCNSNH) and 187-215 (VTCPICVSLPWGDPSQVTRNFVSHLNQRH). Residues 225–243 (LQLDEETQYQTAVEESFQV) enclose the UIM domain.

As to quaternary structure, interacts with NLK. Interacts with XRCC5/Ku80. Interacts with RBBP8/CtIP. Post-translationally, auto-ubiquitinated.

The protein resides in the chromosome. It catalyses the reaction S-ubiquitinyl-[E2 ubiquitin-conjugating enzyme]-L-cysteine + [acceptor protein]-L-lysine = [E2 ubiquitin-conjugating enzyme]-L-cysteine + N(6)-ubiquitinyl-[acceptor protein]-L-lysine.. It participates in protein modification; protein ubiquitination. In terms of biological role, E3 ubiquitin-protein ligase involved in DNA damage response by promoting DNA resection and homologous recombination. Recruited to sites of double-strand breaks following DNA damage and specifically promotes double-strand break repair via homologous recombination. Two different, non-exclusive, mechanisms have been proposed. According to a report, regulates the choice of double-strand break repair by favoring homologous recombination over non-homologous end joining (NHEJ): acts by mediating ubiquitination of XRCC5/Ku80, leading to remove the Ku complex from DNA breaks, thereby promoting homologous recombination. According to another report, cooperates with UBE2Ds E2 ubiquitin ligases (UBE2D1, UBE2D2, UBE2D3 or UBE2D4) to promote homologous recombination by mediating ubiquitination of RBBP8/CtIP. Together with NLK, involved in the ubiquitination and degradation of TCF/LEF. Also exhibits auto-ubiquitination activity in combination with UBE2K. May act as a negative regulator in the Wnt/beta-catenin-mediated signaling pathway. This chain is E3 ubiquitin-protein ligase RNF138 (RNF138), found in Bos taurus (Bovine).